Here is a 54-residue protein sequence, read N- to C-terminus: Large ribosomal subunit protein bL33 (54 aa).

Belongs to the bacterial ribosomal protein bL33 family.

In Roseiflexus castenholzii (strain DSM 13941 / HLO8), this protein is Large ribosomal subunit protein bL33.